The sequence spans 121 residues: Large ribosomal subunit protein uL18 (121 aa).

The tract at residues 63–88 (AAIRPDPSPKKSQKQPPKTHKRYNLK) is disordered. Over residues 73–87 (KSQKQPPKTHKRYNL) the composition is skewed to basic residues.

This sequence belongs to the universal ribosomal protein uL18 family. As to quaternary structure, component of the large ribosomal subunit (LSU).

The protein localises to the cytoplasm. It localises to the nucleus. In terms of biological role, component of the ribosome, a large ribonucleoprotein complex responsible for the synthesis of proteins in the cell. The small ribosomal subunit (SSU) binds messenger RNAs (mRNAs) and translates the encoded message by selecting cognate aminoacyl-transfer RNA (tRNA) molecules. The large subunit (LSU) contains the ribosomal catalytic site termed the peptidyl transferase center (PTC), which catalyzes the formation of peptide bonds, thereby polymerizing the amino acids delivered by tRNAs into a polypeptide chain. The nascent polypeptides leave the ribosome through a tunnel in the LSU and interact with protein factors that function in enzymatic processing, targeting, and the membrane insertion of nascent chains at the exit of the ribosomal tunnel. This Solanum melongena (Eggplant) protein is Large ribosomal subunit protein uL18 (RPL5).